The sequence spans 34 residues: Cuticle protein 9 (34 aa).

The chain is Cuticle protein 9 from Blaberus craniifer (Death's head cockroach).